Consider the following 639-residue polypeptide: DNA mismatch repair protein MutL (639 aa).

The segment at 336-392 (SAHDDPTPAISGAARDEEPRGVENRASAGENRFNRPASSPVASAPRPAHVAAPRMPA) is disordered. Residues 349-358 (ARDEEPRGVE) are compositionally biased toward basic and acidic residues. The segment covering 370–392 (RPASSPVASAPRPAHVAAPRMPA) has biased composition (low complexity).

The protein belongs to the DNA mismatch repair MutL/HexB family.

Its function is as follows. This protein is involved in the repair of mismatches in DNA. It is required for dam-dependent methyl-directed DNA mismatch repair. May act as a 'molecular matchmaker', a protein that promotes the formation of a stable complex between two or more DNA-binding proteins in an ATP-dependent manner without itself being part of a final effector complex. The protein is DNA mismatch repair protein MutL of Edwardsiella ictaluri (strain 93-146).